The chain runs to 159 residues: GDP-mannose mannosyl hydrolase (159 aa).

Substrate-binding positions include 2 to 3 (FL), Phe8, and Arg36. The Nudix hydrolase domain maps to 13–153 (RSTPLVSLDF…SRAYFLAEKR (141 aa)). Residues Gly49, Glu69, and Gln122 each contribute to the Mg(2+) site. The short motif at 50–71 (GRVQKDETLEAAFERLTMAELG) is the Nudix box element.

Belongs to the Nudix hydrolase family. In terms of assembly, homodimer. The cofactor is Mg(2+).

The catalysed reaction is GDP-alpha-D-mannose + H2O = D-mannose + GDP + H(+). Hydrolyzes GDP-mannose. The polypeptide is GDP-mannose mannosyl hydrolase (Escherichia coli O157:H7).